Reading from the N-terminus, the 300-residue chain is Ribosomal protein L11 methyltransferase (300 aa).

The S-adenosyl-L-methionine site is built by Thr-152, Gly-173, Asp-195, and Asn-234.

Belongs to the methyltransferase superfamily. PrmA family.

The protein resides in the cytoplasm. The catalysed reaction is L-lysyl-[protein] + 3 S-adenosyl-L-methionine = N(6),N(6),N(6)-trimethyl-L-lysyl-[protein] + 3 S-adenosyl-L-homocysteine + 3 H(+). Methylates ribosomal protein L11. The protein is Ribosomal protein L11 methyltransferase of Burkholderia multivorans (strain ATCC 17616 / 249).